A 95-amino-acid polypeptide reads, in one-letter code: Aspartyl/glutamyl-tRNA(Asn/Gln) amidotransferase subunit C (95 aa).

It belongs to the GatC family. As to quaternary structure, heterotrimer of A, B and C subunits.

It catalyses the reaction L-glutamyl-tRNA(Gln) + L-glutamine + ATP + H2O = L-glutaminyl-tRNA(Gln) + L-glutamate + ADP + phosphate + H(+). The catalysed reaction is L-aspartyl-tRNA(Asn) + L-glutamine + ATP + H2O = L-asparaginyl-tRNA(Asn) + L-glutamate + ADP + phosphate + 2 H(+). In terms of biological role, allows the formation of correctly charged Asn-tRNA(Asn) or Gln-tRNA(Gln) through the transamidation of misacylated Asp-tRNA(Asn) or Glu-tRNA(Gln) in organisms which lack either or both of asparaginyl-tRNA or glutaminyl-tRNA synthetases. The reaction takes place in the presence of glutamine and ATP through an activated phospho-Asp-tRNA(Asn) or phospho-Glu-tRNA(Gln). The polypeptide is Aspartyl/glutamyl-tRNA(Asn/Gln) amidotransferase subunit C (Azoarcus sp. (strain BH72)).